The sequence spans 139 residues: Protein shisa-5 (139 aa).

Residues 3–23 (FGTLVAIGVIVFAVVVITIIL) form a helical membrane-spanning segment.

It belongs to the shisa family.

The protein resides in the endoplasmic reticulum membrane. Its subcellular location is the nucleus membrane. Can induce apoptosis in a caspase-dependent manner and plays a role in p53/TP53-dependent apoptosis. This is Protein shisa-5 (Shisa5) from Gallus gallus (Chicken).